The primary structure comprises 187 residues: Elongation factor P (187 aa).

It belongs to the elongation factor P family.

It is found in the cytoplasm. Its pathway is protein biosynthesis; polypeptide chain elongation. In terms of biological role, involved in peptide bond synthesis. Stimulates efficient translation and peptide-bond synthesis on native or reconstituted 70S ribosomes in vitro. Probably functions indirectly by altering the affinity of the ribosome for aminoacyl-tRNA, thus increasing their reactivity as acceptors for peptidyl transferase. The protein is Elongation factor P of Zymomonas mobilis subsp. mobilis (strain ATCC 31821 / ZM4 / CP4).